Consider the following 276-residue polypeptide: Large ribosomal subunit protein uL2 (276 aa).

Positions 223 to 276 are disordered; it reads GSAMNPVDHPHGGGEGKAPIGHPGPLTPWGKPTLGYKTRKKNKPSDKFIVKRRK. The span at 265-276 shows a compositional bias: basic and acidic residues; the sequence is KPSDKFIVKRRK.

Belongs to the universal ribosomal protein uL2 family. As to quaternary structure, part of the 50S ribosomal subunit. Forms a bridge to the 30S subunit in the 70S ribosome.

Functionally, one of the primary rRNA binding proteins. Required for association of the 30S and 50S subunits to form the 70S ribosome, for tRNA binding and peptide bond formation. It has been suggested to have peptidyltransferase activity; this is somewhat controversial. Makes several contacts with the 16S rRNA in the 70S ribosome. The polypeptide is Large ribosomal subunit protein uL2 (Caldicellulosiruptor saccharolyticus (strain ATCC 43494 / DSM 8903 / Tp8T 6331)).